The chain runs to 426 residues: Glutamate-1-semialdehyde 2,1-aminomutase (426 aa).

At K263 the chain carries N6-(pyridoxal phosphate)lysine.

It belongs to the class-III pyridoxal-phosphate-dependent aminotransferase family. HemL subfamily. In terms of assembly, homodimer. The cofactor is pyridoxal 5'-phosphate.

It localises to the cytoplasm. The enzyme catalyses (S)-4-amino-5-oxopentanoate = 5-aminolevulinate. It functions in the pathway porphyrin-containing compound metabolism; protoporphyrin-IX biosynthesis; 5-aminolevulinate from L-glutamyl-tRNA(Glu): step 2/2. This is Glutamate-1-semialdehyde 2,1-aminomutase from Caldicellulosiruptor bescii (strain ATCC BAA-1888 / DSM 6725 / KCTC 15123 / Z-1320) (Anaerocellum thermophilum).